The sequence spans 292 residues: 4-hydroxybenzoate octaprenyltransferase (292 aa).

9 helical membrane-spanning segments follow: residues 24–44, 47–67, 97–117, 119–139, 145–165, 171–191, 214–234, 238–258, and 270–290; these read IGTL…NAGM, LTNF…GCVI, AISL…MLSV, TILL…MKRY, VVLG…SINA, WLLF…YAMV, HIIG…GALN, LSYW…QVLI, and FLNN…SYPV.

The protein belongs to the UbiA prenyltransferase family. Requires Mg(2+) as cofactor.

Its subcellular location is the cell inner membrane. The catalysed reaction is all-trans-octaprenyl diphosphate + 4-hydroxybenzoate = 4-hydroxy-3-(all-trans-octaprenyl)benzoate + diphosphate. It participates in cofactor biosynthesis; ubiquinone biosynthesis. Catalyzes the prenylation of para-hydroxybenzoate (PHB) with an all-trans polyprenyl group. Mediates the second step in the final reaction sequence of ubiquinone-8 (UQ-8) biosynthesis, which is the condensation of the polyisoprenoid side chain with PHB, generating the first membrane-bound Q intermediate 3-octaprenyl-4-hydroxybenzoate. The protein is 4-hydroxybenzoate octaprenyltransferase of Pseudoalteromonas translucida (strain TAC 125).